Consider the following 507-residue polypeptide: Peroxisomal membrane protein PEX14 (507 aa).

Composition is skewed to polar residues over residues 1–10 (MATHQQTQPP) and 32–48 (EVQQ…SVFK). Positions 1–52 (MATHQQTQPPSDFPALADENSQIPEATKPANEVQQATIAQDPPTSVFKNSEP) are disordered. Residues 1–152 (MATHQQTQPP…QAAFLSRFRW (152 aa)) are Peroxisomal-facing. 2 involved in interaction with PEX5 regions span residues 58-65 (IQNAIKFL) and 78-97 (RRSF…EAFR). A helical membrane pass occupies residues 153-173 (YHAILAVGVLAASGAGTAVFI). The Cytoplasmic segment spans residues 174 to 507 (KRSLIPRFKS…EQQHISQEGN (334 aa)). The span at 288-302 (VTTARKPYTNGSNVD) shows a compositional bias: polar residues. Disordered stretches follow at residues 288–329 (VTTA…PKSY), 344–394 (NIRE…NPRS), 409–435 (ANQN…QPPP), and 448–507 (PKPQ…QEGN). The segment covering 308–322 (ARSASPPAAPADSSA) has biased composition (low complexity). The span at 378–394 (QDESSNGQWWQQKNPRS) shows a compositional bias: polar residues.

The protein belongs to the peroxin-14 family. Interacts with PEX13; forming the PEX13-PEX14 docking complex. Interacts with PEX5 (via WxxxF/Y motifs). As to expression, expressed in flowers, siliques, leaves and roots.

It localises to the peroxisome membrane. Functionally, component of the PEX13-PEX14 docking complex, a translocon channel that specifically mediates the import of peroxisomal cargo proteins bound to PEX5 receptor. The PEX13-PEX14 docking complex forms a large import pore which can be opened to a diameter of about 9 nm. Mechanistically, PEX5 receptor along with cargo proteins associates with the PEX14 subunit of the PEX13-PEX14 docking complex in the cytosol, leading to the insertion of the receptor into the organelle membrane with the concomitant translocation of the cargo into the peroxisome matrix. In Arabidopsis thaliana (Mouse-ear cress), this protein is Peroxisomal membrane protein PEX14.